The following is a 979-amino-acid chain: METGSPGKRPVLPKRARLLVTAGMGMLALLLFGPRLVDIYVDWLWFGEVGFRSVWITVLLTRLAIVAAVALVVAGIVLAALLLAYRSRPFFVPDEPQRDPVAPLRSAVMRRPRLFGWGIAVTLGVVCGLIASFDWVKVQLFVHGGTFGIVDPEFGYDIGFFVFDLPFYRSVLNWLFVAVVLAFLASLLTHYLFGGLRLTTGRGMLTQAARVQLAVFAGAVVLLKAVAYWLDRYELLSSGRKEPTFTGAGYTDIHAELPAKLVLVAIAVLCAVSFFTAIFLRDLRIPAMAAALLVLSAILVGGLWPLLMEQFSVRPNAADVERPYIQRNIEATREAYRIGGDWVQYRSYPGIGTKQPRDVPVDVTTIAKVRLLDPHILSRTFTQQQQLKNFFSFAEILDIDRYRIDGELQDYIVGVRELSPKSLTGNQTDWINKHTVYTHGNGFVAAPANRVNAAARDAENISDSNSGYPIYAVSDIASLGSGRQVIPVEQPRVYYGEVIAQADPDYAIVGGAPGSAPREYDTDTSKYTYTGAGGVSIGNWFNRTVFATKFAQHKFLFSREIGSESKVLIHRDPKERVQRVAPWLTTDDNPYPVVVNGRIVWIVDAYTTLDTYPYAQRSSLEGPVTSPTGIVRQGKQVSYVRNSVKATVDAYDGTVTLFQFDRDDPVLRTWMRAFPGTVKSEDQIPDELRAHFRYPEDLFEVQRSLLAKYHVDEPREFFTTNAFWSVPSDPTNDANATQPPFYVLVGDQQSAQPSFRLASAMVGYNREFLSAYISAHSDPANYGKLTVLELPTDTLTQGPQQIQNSMISDTRVASERTLLERSNRIHYGNLLSLPIADGGVLYVEPLYTERISTSPSSSTFPQLSRVLVSVREPRTEGGVRVGYAPTLAESLDQVFGPGTGRVATAPGGDAASAPPPGAGGPAPPQAVPPPRTTQPPAAPPRGPDVPPATVAELRETLADLRAVLDRLEKAIDAAETPGG.

Transmembrane regions (helical) follow at residues 19-39 (LVTAGMGMLALLLFGPRLVDI), 63-83 (LAIVAAVALVVAGIVLAALLL), 114-134 (LFGWGIAVTLGVVCGLIASFD), 174-194 (WLFVAVVLAFLASLLTHYLFG), 211-231 (VQLAVFAGAVVLLKAVAYWLD), 260-280 (KLVLVAIAVLCAVSFFTAIFL), and 288-308 (MAAALLVLSAILVGGLWPLLM). The segment at 898–948 (GTGRVATAPGGDAASAPPPGAGGPAPPQAVPPPRTTQPPAAPPRGPDVPPA) is disordered. The segment covering 902–912 (VATAPGGDAAS) has biased composition (low complexity). Pro residues predominate over residues 913–946 (APPPGAGGPAPPQAVPPPRTTQPPAAPPRGPDVP).

It belongs to the UPF0182 family.

Its subcellular location is the cell membrane. This chain is UPF0182 protein BCG_0095, found in Mycobacterium bovis (strain BCG / Pasteur 1173P2).